We begin with the raw amino-acid sequence, 403 residues long: Serine/threonine transporter SstT (403 aa).

Helical transmembrane passes span G11 to S31, A51 to G71, V81 to F101, A138 to L158, A175 to V195, L213 to V233, V285 to L305, and F319 to V339.

Belongs to the dicarboxylate/amino acid:cation symporter (DAACS) (TC 2.A.23) family.

It localises to the cell inner membrane. It catalyses the reaction L-serine(in) + Na(+)(in) = L-serine(out) + Na(+)(out). The enzyme catalyses L-threonine(in) + Na(+)(in) = L-threonine(out) + Na(+)(out). Involved in the import of serine and threonine into the cell, with the concomitant import of sodium (symport system). In Haemophilus ducreyi (strain 35000HP / ATCC 700724), this protein is Serine/threonine transporter SstT.